Reading from the N-terminus, the 317-residue chain is Ribonuclease Z (317 aa).

Zn(2+)-binding residues include histidine 63, histidine 65, aspartate 67, histidine 68, histidine 143, aspartate 214, and histidine 272. Residue aspartate 67 is the Proton acceptor of the active site.

Belongs to the RNase Z family. Homodimer. Zn(2+) is required as a cofactor.

It carries out the reaction Endonucleolytic cleavage of RNA, removing extra 3' nucleotides from tRNA precursor, generating 3' termini of tRNAs. A 3'-hydroxy group is left at the tRNA terminus and a 5'-phosphoryl group is left at the trailer molecule.. Functionally, zinc phosphodiesterase, which displays some tRNA 3'-processing endonuclease activity. Probably involved in tRNA maturation, by removing a 3'-trailer from precursor tRNA. The protein is Ribonuclease Z of Ligilactobacillus salivarius (strain UCC118) (Lactobacillus salivarius).